Consider the following 342-residue polypeptide: Trans-enoyl reductase himH (342 aa).

NADP(+) is bound at residue 46–49; sequence TDWK. Residue 133 to 140 coordinates substrate; that stretch reads LSVSTAAS. NADP(+) contacts are provided by residues 168 to 171, 191 to 194, 255 to 256, and 329 to 330; these read SSSV, SQAN, VM, and VS.

Belongs to the zinc-containing alcohol dehydrogenase family. As to quaternary structure, monomer.

It participates in secondary metabolite biosynthesis. Trans-enoyl reductase; part of the him gene cluster that mediates the biosynthesis of himeic acid A, a ubiquitin-activating enzyme (E1) inhibitor. First, himA, together with the trans-enoyl reductase himH, catalyzes the formation of apolyketide chain, which is then condensed with leucine by the NRPS activity of himA. Dieckmann cyclization and release from himA gives a tetramic acid intermediate as the product of himA PKS-NRPS. HimG then catalyzes alpha-oxidation of the tetramic acid ring, with a subsequent rearrangement to yield apyrone intermediate. Two terminal methyl groups of polyketide and amide side chains are oxidized to carboxylic acids by himC cytochrome P450 monooxygenase to form himeic acid A. Himeic acid A is further converted to himeic acid B and C during culture growth. No gene responsible for pyrone to pyridone conversion was found in the him gene cluster and himeic acid A is non-enzymatically converted to himeic acid C by the incorporation of an ammonium nitrogen atom in a pH5 buffer, and to himeic acid B at a conversion ratio of 50% during incubation in MeOH for 5 days. The sequence is that of Trans-enoyl reductase himH from Aspergillus japonicus.